The sequence spans 268 residues: MSWDDEEFEVRTSTKDQPMVVSWDDEFNNDDDDALLESWDAEEVPKQKQKPKAAPKAAKKVDKKGETVLLEIDTLDEKTRKELLKKAELNSDLNNAAALFDGLGVAEEHPRARALRQEEELAALSRPAALTKQTPFESHPLFSEAETKSDFQDLRKALSTAIAGMAEKSSLNYSGALAIDLIRDVAKPLSIESIRQTVATLNVLIKEKERQERQARLAKVKGGTATGGAGKKKAKAARPNLGGAFKKDQEFSLEDNSEFADFGDDDFM.

Disordered regions lie at residues 1-27, 40-63, and 217-249; these read MSWD…DDEF, DAEE…KVDK, and LAKV…KKDQ. Residues 47–58 are compositionally biased toward basic residues; sequence QKQKPKAAPKAA. Positions 191–221 form a coiled coil; that stretch reads IESIRQTVATLNVLIKEKERQERQARLAKVK.

Belongs to the eIF-3 subunit J family. As to quaternary structure, component of the eukaryotic translation initiation factor 3 (eIF-3) complex.

The protein localises to the cytoplasm. Its function is as follows. Component of the eukaryotic translation initiation factor 3 (eIF-3) complex, which is involved in protein synthesis of a specialized repertoire of mRNAs and, together with other initiation factors, stimulates binding of mRNA and methionyl-tRNAi to the 40S ribosome. The eIF-3 complex specifically targets and initiates translation of a subset of mRNAs involved in cell proliferation. The chain is Eukaryotic translation initiation factor 3 subunit J from Eremothecium gossypii (strain ATCC 10895 / CBS 109.51 / FGSC 9923 / NRRL Y-1056) (Yeast).